Here is a 402-residue protein sequence, read N- to C-terminus: La-related protein 7 homolog (402 aa).

Residues 64–138 form an HTH La-type RNA-binding-like region region; the sequence is EPLNPDFLSA…FDNSSHMVIR (75 aa). An RRM-like region region spans residues 148-230; that stretch reads IPLYDRIIYV…LTRKEWTNRE (83 aa). Positions 288 to 400 are xRRM-like region; sequence DFTKNLLTRI…EEEKNYWRML (113 aa). In terms of domain architecture, xRRM spans 288-402; it reads DFTKNLLTRI…EKNYWRMLKK (115 aa).

This sequence belongs to the LARP7 family. Component of the telomerase holoenzyme complex composed minimally of trt1 and the telomerase RNA template component. Interacts with skp1.

Its subcellular location is the chromosome. It localises to the telomere. The protein localises to the nucleus. The protein resides in the cytoplasm. Its function is as follows. RNA-binding protein required for assembly of the holoenzyme telomerase ribonucleoprotein (RNP) complex. Specifically binds telomerase RNA ter1 and promotes assembly of ter1 with catalytic subunit trt1. Telomerase is a ribonucleoprotein enzyme essential that copies new telomeric repeats onto chromosome ends and functions to maintain cell division. This is La-related protein 7 homolog from Schizosaccharomyces pombe (strain 972 / ATCC 24843) (Fission yeast).